We begin with the raw amino-acid sequence, 576 residues long: Proline--tRNA ligase (576 aa).

This sequence belongs to the class-II aminoacyl-tRNA synthetase family. ProS type 1 subfamily. In terms of assembly, homodimer.

Its subcellular location is the cytoplasm. The catalysed reaction is tRNA(Pro) + L-proline + ATP = L-prolyl-tRNA(Pro) + AMP + diphosphate. Functionally, catalyzes the attachment of proline to tRNA(Pro) in a two-step reaction: proline is first activated by ATP to form Pro-AMP and then transferred to the acceptor end of tRNA(Pro). As ProRS can inadvertently accommodate and process non-cognate amino acids such as alanine and cysteine, to avoid such errors it has two additional distinct editing activities against alanine. One activity is designated as 'pretransfer' editing and involves the tRNA(Pro)-independent hydrolysis of activated Ala-AMP. The other activity is designated 'posttransfer' editing and involves deacylation of mischarged Ala-tRNA(Pro). The misacylated Cys-tRNA(Pro) is not edited by ProRS. This chain is Proline--tRNA ligase, found in Leptospira borgpetersenii serovar Hardjo-bovis (strain L550).